The sequence spans 350 residues: Kelch domain-containing protein 9 (350 aa).

3 Kelch repeats span residues 39 to 89 (RFYL…LVGG), 91 to 137 (WLCV…SHTC), and 325 to 350 (QLYL…EFFI).

Interacts with CCNA1.

The protein is Kelch domain-containing protein 9 (Klhdc9) of Mus musculus (Mouse).